We begin with the raw amino-acid sequence, 138 residues long: Acidic phospholipase A2 (138 aa).

A signal peptide spans 1–16 (MRTLWIVAVLLLGVEG). Cystine bridges form between C42-C131, C44-C60, C59-C111, C65-C138, C66-C104, C73-C97, and C91-C102. Ca(2+)-binding residues include Y43, G45, and G47. H63 is a catalytic residue. Ca(2+) is bound at residue D64. The active site involves D105.

It belongs to the phospholipase A2 family. Group II subfamily. D49 sub-subfamily. Homodimer. Requires Ca(2+) as cofactor. As to expression, expressed by the venom gland.

The protein resides in the secreted. The catalysed reaction is a 1,2-diacyl-sn-glycero-3-phosphocholine + H2O = a 1-acyl-sn-glycero-3-phosphocholine + a fatty acid + H(+). In terms of biological role, PLA2 catalyzes the calcium-dependent hydrolysis of the 2-acyl groups in 3-sn-phosphoglycerides. This Crotalus atrox (Western diamondback rattlesnake) protein is Acidic phospholipase A2.